A 501-amino-acid chain; its full sequence is Putative BTB/POZ domain-containing protein L107 (501 aa).

In terms of domain architecture, BTB spans T16–Q87.

Belongs to the mimivirus BTB/WD family.

The sequence is that of Putative BTB/POZ domain-containing protein L107 from Acanthamoeba polyphaga mimivirus (APMV).